The chain runs to 320 residues: MARNKIALIGSGMIGGTLAHLAGLKELGDIVLFDIADGIPQGKGLDIAQSSPVEGFDASLTGASDYSAIEGADVCIVTAGVPRKPGMSRDDLLGINLKVMEQVGAGIKKYAPNAFVICITNPLDAMVWALQKFSGLPKNKVVGMAGVLDSSRFRLFLAEEFNVSVKDITAFVLGGHGDTMVPLARYSTVAGIPLPDLIQMGWTTKEKLDQIIQRTRDGGAEIVGLLKTGSAYYAPAASAIEMAEAYLKDKKRVLPCAAHLSGQYGVKDMYVGVPTVIGAGGIERIIEIDLNKGEKEAFDKSVAAVAGLCEACINIAPSLK.

NAD(+)-binding positions include Gly10–Gly15 and Asp34. Arg83 and Arg89 together coordinate substrate. NAD(+)-binding positions include Asn96 and Ile119–Asn121. Substrate-binding residues include Asn121 and Arg152. The Proton acceptor role is filled by His176.

It belongs to the LDH/MDH superfamily. MDH type 3 family.

The catalysed reaction is (S)-malate + NAD(+) = oxaloacetate + NADH + H(+). Functionally, catalyzes the reversible oxidation of malate to oxaloacetate. The chain is Malate dehydrogenase from Rhizobium meliloti (strain 1021) (Ensifer meliloti).